Here is a 664-residue protein sequence, read N- to C-terminus: Acetylcholinesterase (664 aa).

The first 29 residues, 1 to 29 (MFVNQRTRRPYMSVFVLVLGAAVICPAYG), serve as a signal peptide directing secretion. A disulfide bridge connects residues cysteine 95 and cysteine 122. An N-linked (GlcNAc...) asparagine glycan is attached at asparagine 117. Serine 261 acts as the Acyl-ester intermediate in catalysis. A disulfide bridge links cysteine 315 with cysteine 330. The N-linked (GlcNAc...) asparagine glycan is linked to asparagine 316. Catalysis depends on charge relay system residues glutamate 390 and histidine 504. A disulfide bridge connects residues cysteine 466 and cysteine 588. A glycan (N-linked (GlcNAc...) asparagine) is linked at asparagine 517. Asparagine 647 carries the GPI-anchor amidated asparagine lipid modification. A propeptide spans 648 to 664 (KTPPHPQVILETRAFMH) (removed in mature form).

It belongs to the type-B carboxylesterase/lipase family. In terms of assembly, homodimer; disulfide-linked.

Its subcellular location is the synapse. It localises to the cell membrane. It carries out the reaction acetylcholine + H2O = choline + acetate + H(+). In terms of biological role, rapidly hydrolyzes choline released into the synapse. It can hydrolyze butyrylthiocholine. This is Acetylcholinesterase from Anopheles stephensi (Indo-Pakistan malaria mosquito).